A 389-amino-acid chain; its full sequence is MSFQPTPEDKFTFGLWTVGWQGRDPFGDATRPALDPVETVQRLAELGAYGVTFHDDDLIPFGSSDTERESHIKRFRQALDATGMTVPMATTNLFTHPVFKDGGFTANDRDVRRYALRKTIRNIDLAAELGAKTYVAWGGREGAESGGAKDVRDALDRMKEAFDLLGEYVTAQGYDLRFAIEPKPNEPRGDILLPTVGHALAFIERLERPELYGVNPEVGHEQMAGLNFPHGIAQALWAGKLFHIDLNGQSGIKYDQDLRFGAGDLRAAFWLVDLLESAGYEGPRHFDFKPPRTEDFDGVWASAEGCMRNYLILKERAAAFRADPEVQEALRAARLDQLAQPTAADGLEALLADRTAFEDFDVEAAAARAAWPFERLDQLAMDHLLGARG.

Catalysis depends on residues His54 and Asp57. Mg(2+) contacts are provided by Glu181, Glu217, His220, Asp245, Asp255, Asp257, and Asp287.

Belongs to the xylose isomerase family. As to quaternary structure, homotetramer. Mg(2+) is required as a cofactor.

It is found in the cytoplasm. The enzyme catalyses alpha-D-xylose = alpha-D-xylulofuranose. Its function is as follows. Involved in D-xylose catabolism. The sequence is that of Xylose isomerase (xylA) from Streptomyces violaceusniger.